A 1377-amino-acid polypeptide reads, in one-letter code: DNA-directed RNA polymerase subunit beta' (1377 aa).

Cysteine 60, cysteine 62, cysteine 75, and cysteine 78 together coordinate Zn(2+). Residues aspartate 449, aspartate 451, and aspartate 453 each contribute to the Mg(2+) site. Positions 777, 851, 858, and 861 each coordinate Zn(2+).

The protein belongs to the RNA polymerase beta' chain family. In terms of assembly, the RNAP catalytic core consists of 2 alpha, 1 beta, 1 beta' and 1 omega subunit. When a sigma factor is associated with the core the holoenzyme is formed, which can initiate transcription. It depends on Mg(2+) as a cofactor. Zn(2+) is required as a cofactor.

It carries out the reaction RNA(n) + a ribonucleoside 5'-triphosphate = RNA(n+1) + diphosphate. In terms of biological role, DNA-dependent RNA polymerase catalyzes the transcription of DNA into RNA using the four ribonucleoside triphosphates as substrates. The protein is DNA-directed RNA polymerase subunit beta' of Borrelia hermsii (strain HS1 / DAH).